Here is a 339-residue protein sequence, read N- to C-terminus: Erlin-2 (339 aa).

Residues 1–3 (MAQ) lie on the Cytoplasmic side of the membrane. A helical transmembrane segment spans residues 4 to 24 (LGAVVAVASSFFCASLFSAVH). Residues 25–339 (KIEEGHIGVY…EPLETATKEN (315 aa)) are Lumenal-facing. N-linked (GlcNAc...) asparagine glycosylation occurs at N106. The interval 177–309 (EAIRRNYELM…DIPNMFMDSA (133 aa)) is interaction with ERLIN1. The residue at position 267 (K267) is an N6-acetyllysine.

It belongs to the band 7/mec-2 family. Forms a heteromeric complex with ERLIN1. In complex with ERLIN1, interacts with RNF170. Interacts with activated ITPR1, independently of the degree of ITPR1 polyubiquitination. Interacts with SCAP, INSIG1, SREBF1 and SREBF2 under cholesterol sufficiency conditions; indicative for an association with the SCAP-SREBP-INSIG complex. Probably part of an AMFR/gp78 and INSIG1-containing ubiquitin ligase complex involved in ERAD of HMGCR. Interacts with TMUB1; TMUB1 bridges the association with AMFR. Interacts with SYVN1 and RNF139. Interacts with TMEM259. Interacts with TMEM41B. In terms of processing, deubiquitinated by USP25; leading to stabilization. As to expression, ubiquitous.

The protein localises to the endoplasmic reticulum membrane. Its function is as follows. Component of the ERLIN1/ERLIN2 complex which mediates the endoplasmic reticulum-associated degradation (ERAD) of inositol 1,4,5-trisphosphate receptors (IP3Rs) such as ITPR1. Promotes sterol-accelerated ERAD of HMGCR probably implicating an AMFR/gp78-containing ubiquitin ligase complex. Involved in regulation of cellular cholesterol homeostasis by regulation the SREBP signaling pathway. May promote ER retention of the SCAP-SREBF complex. In Homo sapiens (Human), this protein is Erlin-2 (ERLIN2).